Consider the following 237-residue polypeptide: RING finger protein vilya (237 aa).

An RING-type zinc finger spans residues Cys21–Arg69. Residues Met172–Leu237 form a disordered region. Residues Arg180 to Ser195 show a composition bias toward low complexity. Residues Arg221 to Leu237 are compositionally biased toward polar residues.

As to quaternary structure, may interact with itself and with narya and nenya through their RING-type zinc fingers. In terms of tissue distribution, expressed in nurse cell and pro-oocytes (at protein level).

It is found in the chromosome. Its function is as follows. Required for the formation of DNA double-strand breaks during meiosis together with narya and nenya. In Drosophila melanogaster (Fruit fly), this protein is RING finger protein vilya.